The primary structure comprises 186 residues: UPF0149 protein Pfl01_5435 (186 aa).

It belongs to the UPF0149 family.

In Pseudomonas fluorescens (strain Pf0-1), this protein is UPF0149 protein Pfl01_5435.